The following is a 170-amino-acid chain: Mitotic-spindle organizing protein 2B (170 aa).

Disordered stretches follow at residues 1–26 and 102–170; these read MSRG…SPDA and SADS…GSST. Over residues 8–20 the composition is skewed to low complexity; that stretch reads GSQAMASSQAAGP. Residues 123–132 are compositionally biased toward polar residues; that stretch reads PNPTTSTTQG. Over residues 151–170 the composition is skewed to low complexity; the sequence is SGSRMQKSSSSGKSSGGSST.

This sequence belongs to the MOZART2 family. Part of the gamma-tubulin complex. Interacts with TUBG1.

It is found in the cytoplasm. The protein localises to the cytoskeleton. The protein resides in the microtubule organizing center. It localises to the centrosome. Its subcellular location is the spindle. This is Mitotic-spindle organizing protein 2B (mzt2b) from Xenopus tropicalis (Western clawed frog).